The following is a 31-amino-acid chain: uncharacterized protein (31 aa).

A helical transmembrane segment spans residues 7 to 29; that stretch reads TVVLINFFAAVGLFTLISMRFGW.

It localises to the cell inner membrane. This is an uncharacterized protein from Escherichia coli (strain K12).